The following is a 129-amino-acid chain: Transcription antitermination protein NusB (129 aa).

This sequence belongs to the NusB family.

Its function is as follows. Involved in transcription antitermination. Required for transcription of ribosomal RNA (rRNA) genes. Binds specifically to the boxA antiterminator sequence of the ribosomal RNA (rrn) operons. In Staphylococcus aureus (strain N315), this protein is Transcription antitermination protein NusB.